The primary structure comprises 218 residues: Ribosomal RNA small subunit methyltransferase J (218 aa).

S-adenosyl-L-methionine is bound by residues 55-56 (RD), 71-72 (ER), and Asp123.

This sequence belongs to the methyltransferase superfamily. RsmJ family.

The protein localises to the cytoplasm. It carries out the reaction guanosine(1516) in 16S rRNA + S-adenosyl-L-methionine = N(2)-methylguanosine(1516) in 16S rRNA + S-adenosyl-L-homocysteine + H(+). Its function is as follows. Specifically methylates the guanosine in position 1516 of 16S rRNA. In Rhodopseudomonas palustris (strain HaA2), this protein is Ribosomal RNA small subunit methyltransferase J.